The chain runs to 595 residues: Protein alan shepard (595 aa).

The span at 1–12 (MHPRYSPAPPPH) shows a compositional bias: pro residues. Positions 1 to 82 (MHPRYSPAPP…ASVAAAPPTP (82 aa)) are disordered. At Tyr-5 the chain carries Phosphotyrosine. The segment covering 13–31 (QQQQQQQQQPMGGPHQQQS) has biased composition (low complexity). The span at 32-43 (AGGGPGHGGGAS) shows a compositional bias: gly residues. Residues 50–68 (PNSQQLPPQMPRSQNYANG) are compositionally biased toward polar residues. Residues 69-78 (SSSAASVAAA) show a composition bias toward low complexity. A phosphotyrosine mark is found at Tyr-138 and Tyr-154. A disordered region spans residues 184-238 (RVPTAASPSNTNSSSSSNTGSQSGTLSTSLSNTTNTNTTMGPNGTAQNQNQQGGE). Residues 190–238 (SPSNTNSSSSSNTGSQSGTLSTSLSNTTNTNTTMGPNGTAQNQNQQGGE) show a composition bias toward low complexity. 2 consecutive RRM domains span residues 243-316 (TNLY…MAKQ) and 322-401 (TNLY…FADG). The tract at residues 569 to 595 (MTDSEQASTAASPDEAYTQYPHQAAPK) is disordered.

Its function is as follows. Has a role in the perception of gravity. This is Protein alan shepard from Drosophila virilis (Fruit fly).